Here is a 262-residue protein sequence, read N- to C-terminus: Ribose-5-phosphate isomerase A (262 aa).

Substrate is bound by residues Thr33–Thr36, Asp89–Asp92, and Lys102–Gly105. Catalysis depends on Glu111, which acts as the Proton acceptor. Lys129 contributes to the substrate binding site.

It belongs to the ribose 5-phosphate isomerase family. As to quaternary structure, homodimer.

It carries out the reaction aldehydo-D-ribose 5-phosphate = D-ribulose 5-phosphate. It functions in the pathway carbohydrate degradation; pentose phosphate pathway; D-ribose 5-phosphate from D-ribulose 5-phosphate (non-oxidative stage): step 1/1. Its function is as follows. Catalyzes the reversible conversion of ribose-5-phosphate to ribulose 5-phosphate. The sequence is that of Ribose-5-phosphate isomerase A from Cereibacter sphaeroides (strain ATCC 17029 / ATH 2.4.9) (Rhodobacter sphaeroides).